The sequence spans 119 residues: Large ribosomal subunit protein bL20 (119 aa).

The protein belongs to the bacterial ribosomal protein bL20 family.

Its function is as follows. Binds directly to 23S ribosomal RNA and is necessary for the in vitro assembly process of the 50S ribosomal subunit. It is not involved in the protein synthesizing functions of that subunit. This chain is Large ribosomal subunit protein bL20, found in Streptococcus pneumoniae serotype 2 (strain D39 / NCTC 7466).